Reading from the N-terminus, the 956-residue chain is DNA ligase 4 (956 aa).

ATP-binding residues include Glu307, Lys309, Ile310, Arg314, Glu371, Phe409, Glu476, Lys481, Lys498, and Lys500. Lys309 serves as the catalytic N6-AMP-lysine intermediate. Residue Glu371 coordinates Mg(2+). Glu476 is a Mg(2+) binding site. The tract at residues Leu666–Arg700 is disordered. 2 consecutive BRCT domains span residues Arg700–Leu793 and Pro857–Leu956.

This sequence belongs to the ATP-dependent DNA ligase family. Mg(2+) is required as a cofactor.

The protein resides in the nucleus. It catalyses the reaction ATP + (deoxyribonucleotide)n-3'-hydroxyl + 5'-phospho-(deoxyribonucleotide)m = (deoxyribonucleotide)n+m + AMP + diphosphate.. Its function is as follows. DNA ligase involved in DNA non-homologous end joining (NHEJ); required for double-strand break (DSB) repair. The polypeptide is DNA ligase 4 (LIG4) (Yarrowia lipolytica (strain CLIB 122 / E 150) (Yeast)).